A 393-amino-acid chain; its full sequence is Probable acetyl-CoA acetyltransferase (393 aa).

T2 is a propeptide (removed; alternate). C88 (acyl-thioester intermediate) is an active-site residue. Active-site proton acceptor residues include H349 and C379.

This sequence belongs to the thiolase-like superfamily. Thiolase family.

It catalyses the reaction 2 acetyl-CoA = acetoacetyl-CoA + CoA. This chain is Probable acetyl-CoA acetyltransferase (fadA4), found in Mycobacterium tuberculosis (strain ATCC 25618 / H37Rv).